A 661-amino-acid polypeptide reads, in one-letter code: MELKKDINAVSIDMLLIVHSEKRRAAQGTLSDQQANPSSLLQRGGGFQGVGNGVRRWQKLEGNDFHENLVEKQHPQQPQVITSYNSQGTQLTVEVHPRDAMPQLLKKFSLAKRLQGDKNGNTRPRQPGGKDAHAYPWDRSSLKSMSLDLQQFEKLDIYASQVTAKSGLDELVSDLLQEAHTDLERVRAIWIWICHHIEYDIAAAQEKDRQAFKPTDILRTQKTNCDGYAGLFERMCRLAGVQCMTVPGYSKGFGYQTGQSFSGEFDHAWNAVYLEGRWHLVDSTWGSGLVDTITSKFTFLYNEFYFLTHPALFIEDHFPDNKNWQLLKPPQSLRQFENNMYHKSEFYNKGMLSAHPETSMIRTVNGKATVTIESCAPTLFMFMLNGKQEHGLLSLRKNGMKLEVYPPTMGTHKLQIFAKGNSDIYSSVLEYTLKCNYVDMGVQLPAELHQPVGPSWFSEQMGIMKPSHPDPIIHTSDGRCSISFSVEEGINVLASLHGDDGPITEETQRRYIFQLHREKQTELKVQLPHAGKFALKIFVKKRQEPGNYIFVFNYLVCCANTKVNWPMFPESFGNWGQDNELLEPLSGVLPANRNVPFKLKLHGIAKVLVKGQDTWPLTLNHEGYWEGSCSTAGCQEVYVMVLENANHNFYSYILKYKVNAQ.

Over residues 28 to 41 (GTLSDQQANPSSLL) the composition is skewed to polar residues. Disordered regions lie at residues 28–47 (GTLS…GGGF) and 115–136 (QGDK…HAYP). Catalysis depends on residues C225, H267, and D282.

It belongs to the transglutaminase-like superfamily. Interacts with IGFN1 and FLNC. Highly expressed in skeletal muscle.

It localises to the cytoplasm. Its subcellular location is the cytoskeleton. The protein resides in the myofibril. It is found in the sarcomere. The protein localises to the z line. Probable cytoskeleton-associated protease required for normal muscle growth. Involved in function, maturation and stabilization of the neuromuscular junction. May act by cleaving muscle-specific proteins such as FLNC. The chain is Kyphoscoliosis peptidase from Homo sapiens (Human).